We begin with the raw amino-acid sequence, 340 residues long: HPr kinase/phosphorylase (340 aa).

Active-site residues include histidine 153 and lysine 174. 168–175 (GNSGLGKS) contacts ATP. Serine 175 provides a ligand contact to Mg(2+). Aspartate 192 acts as the Proton acceptor; for phosphorylation activity. Proton donor; for dephosphorylation activity in catalysis. Residues 216–225 (MEIRGLGVVD) form an important for the catalytic mechanism of both phosphorylation and dephosphorylation region. A Mg(2+)-binding site is contributed by glutamate 217. Arginine 258 is an active-site residue. Positions 279 to 284 (PINPGK) are important for the catalytic mechanism of dephosphorylation.

It belongs to the HPrK/P family. In terms of assembly, homohexamer. Requires Mg(2+) as cofactor.

It catalyses the reaction [HPr protein]-L-serine + ATP = [HPr protein]-O-phospho-L-serine + ADP + H(+). The enzyme catalyses [HPr protein]-O-phospho-L-serine + phosphate + H(+) = [HPr protein]-L-serine + diphosphate. Functionally, catalyzes the ATP- as well as the pyrophosphate-dependent phosphorylation of a specific serine residue in HPr, a phosphocarrier protein of the phosphoenolpyruvate-dependent sugar phosphotransferase system (PTS). HprK/P also catalyzes the pyrophosphate-producing, inorganic phosphate-dependent dephosphorylation (phosphorolysis) of seryl-phosphorylated HPr (P-Ser-HPr). The chain is HPr kinase/phosphorylase from Prosthecochloris aestuarii (strain DSM 271 / SK 413).